The following is a 433-amino-acid chain: Glutamate-1-semialdehyde 2,1-aminomutase (433 aa).

At Lys-272 the chain carries N6-(pyridoxal phosphate)lysine.

The protein belongs to the class-III pyridoxal-phosphate-dependent aminotransferase family. HemL subfamily. Homodimer. The cofactor is pyridoxal 5'-phosphate.

It is found in the cytoplasm. The enzyme catalyses (S)-4-amino-5-oxopentanoate = 5-aminolevulinate. The protein operates within porphyrin-containing compound metabolism; protoporphyrin-IX biosynthesis; 5-aminolevulinate from L-glutamyl-tRNA(Glu): step 2/2. Its pathway is porphyrin-containing compound metabolism; chlorophyll biosynthesis. This chain is Glutamate-1-semialdehyde 2,1-aminomutase, found in Synechococcus sp. (strain WH7803).